We begin with the raw amino-acid sequence, 476 residues long: Retinoic acid receptor gamma (476 aa).

Residues 1-109 are modulating; it reads MANSSKERLC…PPPPPRVYKP (109 aa). The span at 81–96 shows a compositional bias: low complexity; it reads STVETQSTSSEEMVPS. A disordered region spans residues 81–102; that stretch reads STVETQSTSSEEMVPSSPSPPP. 2 NR C4-type zinc fingers span residues 110-130 and 146-170; these read CFVC…CEGC and CHRD…LQKC. Residues 110-175 constitute a DNA-binding region (nuclear receptor); sequence CFVCNDKSSG…RLQKCFQVGM (66 aa). Residues 176 to 205 are hinge; it reads SKEAVRNDRNKKKKEIKEEVVLPDSYEMPP. The Nuclear localization signal motif lies at 184–189; the sequence is RNKKKK. One can recognise an NR LBD domain in the interval 206 to 440; that stretch reads EMEELIQKVS…PLIREMLENP (235 aa). Residues 435 to 476 form a disordered region; the sequence is EMLENPEAFEDGAATPKPSERSSSESSNGSPTGEDSSGSKTP. The segment covering 462 to 476 has biased composition (polar residues); it reads NGSPTGEDSSGSKTP.

This sequence belongs to the nuclear hormone receptor family. NR1 subfamily. As to quaternary structure, heterodimer; with a rxr molecule. Binds DNA preferentially as a rar/rxr heterodimer. Expressed in embryos, tadpoles and various adult tissue such as kidney, testis, brain, liver, skeletal muscle and spleen.

The protein localises to the nucleus. Receptor for retinoic acid. Retinoic acid receptors bind as heterodimers to their target response elements in response to their ligands, all-trans or 9-cis retinoic acid, and regulate gene expression in various biological processes. The rar/rxr heterodimers bind to the retinoic acid response elements (RARE) composed of tandem 5'-AGGTCA-3' sites known as DR1-DR5. The polypeptide is Retinoic acid receptor gamma (rarg) (Xenopus laevis (African clawed frog)).